The sequence spans 116 residues: Large ribosomal subunit protein uL18 (116 aa).

Belongs to the universal ribosomal protein uL18 family. Part of the 50S ribosomal subunit; part of the 5S rRNA/L5/L18/L25 subcomplex. Contacts the 5S and 23S rRNAs.

In terms of biological role, this is one of the proteins that bind and probably mediate the attachment of the 5S RNA into the large ribosomal subunit, where it forms part of the central protuberance. The protein is Large ribosomal subunit protein uL18 of Shewanella halifaxensis (strain HAW-EB4).